The following is a 185-amino-acid chain: Ribosome-recycling factor (185 aa).

This sequence belongs to the RRF family.

The protein localises to the cytoplasm. Its function is as follows. Responsible for the release of ribosomes from messenger RNA at the termination of protein biosynthesis. May increase the efficiency of translation by recycling ribosomes from one round of translation to another. The protein is Ribosome-recycling factor of Pectobacterium carotovorum subsp. carotovorum (strain PC1).